A 527-amino-acid chain; its full sequence is Putative GTP-binding protein 6 (527 aa).

A Hflx-type G domain is found at 306–470 (PIISILGYTN…QVETAVMKST (165 aa)). GTP is bound by residues 312–319 (GYTNSGKT), 338–342 (FATLD), 360–363 (DTIG), 429–432 (NKID), and 448–450 (SAL). Mg(2+) is bound by residues threonine 319 and threonine 340.

Belongs to the TRAFAC class OBG-HflX-like GTPase superfamily. HflX GTPase family. It depends on Mg(2+) as a cofactor.

In Xenopus laevis (African clawed frog), this protein is Putative GTP-binding protein 6 (gtpbp6).